We begin with the raw amino-acid sequence, 254 residues long: Imidazole glycerol phosphate synthase subunit HisF (254 aa).

Residues aspartate 13 and aspartate 132 contribute to the active site.

Belongs to the HisA/HisF family. As to quaternary structure, heterodimer of HisH and HisF.

It is found in the cytoplasm. The catalysed reaction is 5-[(5-phospho-1-deoxy-D-ribulos-1-ylimino)methylamino]-1-(5-phospho-beta-D-ribosyl)imidazole-4-carboxamide + L-glutamine = D-erythro-1-(imidazol-4-yl)glycerol 3-phosphate + 5-amino-1-(5-phospho-beta-D-ribosyl)imidazole-4-carboxamide + L-glutamate + H(+). Its pathway is amino-acid biosynthesis; L-histidine biosynthesis; L-histidine from 5-phospho-alpha-D-ribose 1-diphosphate: step 5/9. Functionally, IGPS catalyzes the conversion of PRFAR and glutamine to IGP, AICAR and glutamate. The HisF subunit catalyzes the cyclization activity that produces IGP and AICAR from PRFAR using the ammonia provided by the HisH subunit. The sequence is that of Imidazole glycerol phosphate synthase subunit HisF from Sulfurovum sp. (strain NBC37-1).